The following is a 292-amino-acid chain: 2-hydroxy-3-oxopropionate reductase (292 aa).

NAD(+) is bound by residues glycine 4–asparagine 18 and serine 94. Residue lysine 169 is part of the active site. Lysine 237 contacts NAD(+).

Belongs to the HIBADH-related family.

It catalyses the reaction (R)-glycerate + NADP(+) = 2-hydroxy-3-oxopropanoate + NADPH + H(+). The catalysed reaction is (R)-glycerate + NAD(+) = 2-hydroxy-3-oxopropanoate + NADH + H(+). It functions in the pathway organic acid metabolism; glycolate degradation; 3-phospho-D-glycerate from glycolate: step 3/4. The chain is 2-hydroxy-3-oxopropionate reductase (glxR) from Escherichia coli (strain K12).